A 251-amino-acid chain; its full sequence is 1-(5-phosphoribosyl)-5-[(5-phosphoribosylamino)methylideneamino] imidazole-4-carboxamide isomerase (251 aa).

The active-site Proton acceptor is the D8. The active-site Proton donor is D131.

This sequence belongs to the HisA/HisF family.

The protein localises to the cytoplasm. The enzyme catalyses 1-(5-phospho-beta-D-ribosyl)-5-[(5-phospho-beta-D-ribosylamino)methylideneamino]imidazole-4-carboxamide = 5-[(5-phospho-1-deoxy-D-ribulos-1-ylimino)methylamino]-1-(5-phospho-beta-D-ribosyl)imidazole-4-carboxamide. The protein operates within amino-acid biosynthesis; L-histidine biosynthesis; L-histidine from 5-phospho-alpha-D-ribose 1-diphosphate: step 4/9. The polypeptide is 1-(5-phosphoribosyl)-5-[(5-phosphoribosylamino)methylideneamino] imidazole-4-carboxamide isomerase (Burkholderia vietnamiensis (strain G4 / LMG 22486) (Burkholderia cepacia (strain R1808))).